A 387-amino-acid polypeptide reads, in one-letter code: Putative actin-29 (387 aa).

The protein belongs to the actin family.

Its subcellular location is the cytoplasm. The protein localises to the cytoskeleton. The enzyme catalyses ATP + H2O = ADP + phosphate + H(+). Functionally, actins are highly conserved proteins that are involved in various types of cell motility and are ubiquitously expressed in all eukaryotic cells. Multiple isoforms are involved in various cellular functions such as cytoskeleton structure, cell mobility, chromosome movement and muscle contraction. In Dictyostelium discoideum (Social amoeba), this protein is Putative actin-29 (act29).